Consider the following 220-residue polypeptide: Urease accessory protein UreE (220 aa).

Positions 145–220 (EGGAYSAGGH…QIHKRRPDNL (76 aa)) are disordered. The segment covering 156 to 177 (HGHDHGSHEHSAHDHGKHDHAP) has biased composition (basic and acidic residues). Positions 178-188 (AKPATAATPAA) are enriched in low complexity. The span at 191–206 (HGPDCNHGHDHAHEAK) shows a compositional bias: basic and acidic residues.

Belongs to the UreE family.

Its subcellular location is the cytoplasm. Functionally, involved in urease metallocenter assembly. Binds nickel. Probably functions as a nickel donor during metallocenter assembly. The chain is Urease accessory protein UreE from Polaromonas sp. (strain JS666 / ATCC BAA-500).